Consider the following 762-residue polypeptide: uncharacterized protein (762 aa).

The interval Q734–T762 is disordered. A compositionally biased stretch (pro residues) spans A743–A753.

This is an uncharacterized protein from Ostreid herpesvirus 1 (isolate France) (OsHV-1).